The sequence spans 605 residues: DNA primase (605 aa).

Residues 37–61 form a CHC2-type zinc finger; the sequence is CPFHADKNPSMHINPIKGFYHCFAC. The 82-residue stretch at 248 to 329 folds into the Toprim domain; sequence KEIIVCEGYM…DGKVAILQGG (82 aa). Residues Glu-254, Asp-298, and Asp-300 each contribute to the Mg(2+) site.

This sequence belongs to the DnaG primase family. Monomer. Interacts with DnaB. Requires Zn(2+) as cofactor. The cofactor is Mg(2+).

It carries out the reaction ssDNA + n NTP = ssDNA/pppN(pN)n-1 hybrid + (n-1) diphosphate.. In terms of biological role, RNA polymerase that catalyzes the synthesis of short RNA molecules used as primers for DNA polymerase during DNA replication. The chain is DNA primase from Campylobacter jejuni subsp. jejuni serotype O:2 (strain ATCC 700819 / NCTC 11168).